Here is a 336-residue protein sequence, read N- to C-terminus: Adenosine deaminase (336 aa).

Residues His-15 and His-17 each coordinate Zn(2+). Substrate-binding residues include His-17, Asp-19, and Gly-172. His-199 serves as a coordination point for Zn(2+). The active-site Proton donor is the Glu-202. Asp-279 contacts Zn(2+).

It belongs to the metallo-dependent hydrolases superfamily. Adenosine and AMP deaminases family. Adenosine deaminase subfamily. Requires Zn(2+) as cofactor.

The enzyme catalyses adenosine + H2O + H(+) = inosine + NH4(+). The catalysed reaction is 2'-deoxyadenosine + H2O + H(+) = 2'-deoxyinosine + NH4(+). In terms of biological role, catalyzes the hydrolytic deamination of adenosine and 2-deoxyadenosine. This chain is Adenosine deaminase, found in Streptococcus thermophilus (strain ATCC BAA-491 / LMD-9).